The following is a 258-amino-acid chain: Chymotrypsin-like elastase family member 1 (258 aa).

The N-terminal stretch at 1-8 (MLVLYGHS) is a signal peptide. A propeptide spans 9–18 (TQDLPETNAR) (activation peptide). In terms of domain architecture, Peptidase S1 spans 19–256 (VVGGTEAGRN…YISWINNVIA (238 aa)). The cysteines at positions 48 and 64 are disulfide-linked. Residue H63 is the Charge relay system of the active site. Ca(2+) is bound by residues D77, N79, Q82, and E87. N-linked (GlcNAc...) asparagine glycosylation is present at N79. The active-site Charge relay system is the D111. Disulfide bonds link C145/C212, C176/C192, and C202/C232. The active-site Charge relay system is S206. N-linked (GlcNAc...) asparagine glycosylation occurs at N233.

Belongs to the peptidase S1 family. Elastase subfamily. Ca(2+) is required as a cofactor. As to expression, basal layers of epidermis (at protein level). Not expressed in the pancreas.

Its subcellular location is the secreted. The catalysed reaction is Hydrolysis of proteins, including elastin. Preferential cleavage: Ala-|-Xaa.. Functionally, serine proteases that hydrolyze many proteins in addition to elastin. This Homo sapiens (Human) protein is Chymotrypsin-like elastase family member 1 (CELA1).